We begin with the raw amino-acid sequence, 476 residues long: Calcium/calmodulin-dependent protein kinase type 1G (476 aa).

Positions 23–277 (FIFMEVLGSG…CEKALSHPWI (255 aa)) constitute a Protein kinase domain. ATP contacts are provided by residues 29–37 (LGSGAFSEV) and Lys52. The Proton acceptor role is filled by Asp143. Residues 277–317 (IDGNTALHRDIYPSVSLQIQKNFAKSKWRQAFNAAAVVHHM) form an autoinhibitory domain region. The tract at residues 297-318 (KNFAKSKWRQAFNAAAVVHHMR) is calmodulin-binding. The interval 325–352 (HSPGVRPEVENRPPETQASETSRPSSPE) is disordered. Polar residues predominate over residues 338 to 352 (PETQASETSRPSSPE).

It belongs to the protein kinase superfamily. CAMK Ser/Thr protein kinase family. CaMK subfamily. In terms of processing, may be prenylated on Cys-473. As to expression, mainly expressed in brain with small amounts in skeletal muscles, kidney, spleen and liver. Strongly expressed in forebrain neocortex, striatum and limbic system.

The protein localises to the cytoplasm. It is found in the golgi apparatus membrane. The protein resides in the cell membrane. It catalyses the reaction L-seryl-[protein] + ATP = O-phospho-L-seryl-[protein] + ADP + H(+). The catalysed reaction is L-threonyl-[protein] + ATP = O-phospho-L-threonyl-[protein] + ADP + H(+). Activated by Ca(2+)/calmodulin. Binding of calmodulin is thought to result in a conformational change and leads to activation through phosphorylation by CAMKK1. Its function is as follows. Calcium/calmodulin-dependent protein kinase belonging to a proposed calcium-triggered signaling cascade. In vitro phosphorylates transcription factor CREB1. The protein is Calcium/calmodulin-dependent protein kinase type 1G (CAMK1G) of Homo sapiens (Human).